The primary structure comprises 125 residues: Protein ApaG (125 aa).

Positions M1–H125 constitute an ApaG domain.

This is Protein ApaG from Pectobacterium atrosepticum (strain SCRI 1043 / ATCC BAA-672) (Erwinia carotovora subsp. atroseptica).